Reading from the N-terminus, the 107-residue chain is SOSS complex subunit C (107 aa).

It belongs to the SOSS-C family. As to quaternary structure, belongs to the multiprotein complex Integrator. Component of the SOSS complex, composed of soss-b (soss-b1/nabp2 or soss-b2/nabp1), soss-a/ints3 and soss-c/inip.

The protein localises to the nucleus. Component of the SOSS complex, a multiprotein complex that functions downstream of the MRN complex to promote DNA repair and G2/M checkpoint. The SOSS complex associates with single-stranded DNA at DNA lesions and influences diverse endpoints in the cellular DNA damage response including cell-cycle checkpoint activation, recombinational repair and maintenance of genomic stability. Required for efficient homologous recombination-dependent repair of double-strand breaks (DSBs). This Salmo salar (Atlantic salmon) protein is SOSS complex subunit C (inip).